The primary structure comprises 517 residues: ATP synthase subunit alpha 2 (517 aa).

An ATP-binding site is contributed by G173–T180.

It belongs to the ATPase alpha/beta chains family. As to quaternary structure, F-type ATPases have 2 components, CF(1) - the catalytic core - and CF(0) - the membrane proton channel. CF(1) has five subunits: alpha(3), beta(3), gamma(1), delta(1), epsilon(1). CF(0) has three main subunits: a(1), b(2) and c(9-12). The alpha and beta chains form an alternating ring which encloses part of the gamma chain. CF(1) is attached to CF(0) by a central stalk formed by the gamma and epsilon chains, while a peripheral stalk is formed by the delta and b chains.

The protein resides in the cell inner membrane. It carries out the reaction ATP + H2O + 4 H(+)(in) = ADP + phosphate + 5 H(+)(out). Functionally, produces ATP from ADP in the presence of a proton gradient across the membrane. The alpha chain is a regulatory subunit. This chain is ATP synthase subunit alpha 2, found in Legionella pneumophila (strain Corby).